A 321-amino-acid chain; its full sequence is Ribosomal large subunit pseudouridine synthase B (321 aa).

An S4 RNA-binding domain is found at Glu-3–Val-68. Asp-109 serves as the catalytic Nucleophile. Residues Asn-254–Gly-321 form a disordered region. A compositionally biased stretch (basic residues) spans Lys-263 to Arg-277. Polar residues predominate over residues Glu-302–Gly-321.

Belongs to the pseudouridine synthase RsuA family.

The catalysed reaction is uridine(2605) in 23S rRNA = pseudouridine(2605) in 23S rRNA. Its function is as follows. Responsible for synthesis of pseudouridine from uracil-2605 in 23S ribosomal RNA. The protein is Ribosomal large subunit pseudouridine synthase B (rluB) of Vibrio cholerae serotype O1 (strain ATCC 39315 / El Tor Inaba N16961).